The primary structure comprises 441 residues: DNA-binding protein (441 aa).

Over residues 1-18 (MERTPKRAHGFRSTKPVK) the composition is skewed to basic residues. The disordered stretch occupies residues 1 to 85 (MERTPKRAHG…EESPEAPLSD (85 aa)). Acidic residues-rich tracts occupy residues 24 to 33 (MMEEEEEEVE) and 67 to 79 (VDDE…EESP). Zn(2+) is bound by residues Cys-191 and His-193. Positions 204 to 236 (VELNPSSEAGKRALAEQNGVIEKNRFGRQVVVL) are flexible loop. Zn(2+) contacts are provided by Cys-244, Cys-262, Cys-305, Cys-307, Cys-359, and Cys-380. The interval 426-441 (EVLAPVSPIASDDPFA) is C-terminal arm, DBP binding.

It belongs to the adenoviridae E2A DNA-binding protein family. In terms of assembly, homomultimerizes on viral ssDNA bound to pTP. Forms a initiation complex with viral polymerase, pTP and hosts NFIA and POU2F1/OCT1. Interacts with host SRCAP.

The protein localises to the host nucleus. Plays a role in the elongation phase of viral strand displacement replication by unwinding the template in an ATP-independent fashion, employing its capacity to form multimers. Also enhances the rate of initiation. Released from template upon second strand synthesis. Assembles in complex with viral pTP, viral pol, host NFIA and host POU2F1/OCT1 on viral origin of replication. Covers the whole ssDNA genome during synthesis. The complementary strand synthesis induces its relese from DNA template. May inhibit cellular transcription mediated by the interaction between host SRCAP and CBP. This is DNA-binding protein from Fowl adenovirus A serotype 1 (strain CELO / Phelps) (FAdV-1).